A 332-amino-acid chain; its full sequence is L-lactate dehydrogenase A chain (332 aa).

Residues 29–57 (GMVGMASAISILLKDLCDELALVDVMEDK) and Arg99 contribute to the NAD(+) site. Substrate-binding residues include Arg106, Asn138, and Arg169. Asn138 lines the NAD(+) pocket. The active-site Proton acceptor is His193. A substrate-binding site is contributed by Thr248.

The protein belongs to the LDH/MDH superfamily. LDH family. Homotetramer.

The protein localises to the cytoplasm. It carries out the reaction (S)-lactate + NAD(+) = pyruvate + NADH + H(+). The protein operates within fermentation; pyruvate fermentation to lactate; (S)-lactate from pyruvate: step 1/1. Interconverts simultaneously and stereospecifically pyruvate and lactate with concomitant interconversion of NADH and NAD(+). This chain is L-lactate dehydrogenase A chain (ldha), found in Rhinogobiops nicholsii (Blackeye goby).